The primary structure comprises 517 residues: Protein disulfide-isomerase A5 (517 aa).

The signal sequence occupies residues 1–21 (MARAWGLLLAIGVVLPTWLSS). 4 disulfide bridges follow: cysteine 83/cysteine 92, cysteine 180/cysteine 183, cysteine 303/cysteine 306, and cysteine 424/cysteine 427. Thioredoxin domains lie at 132–259 (FLKD…NPLP), 268–382 (PWAD…NPEA), and 376–504 (WMQN…TLRE). A Prevents secretion from ER motif is present at residues 514 to 517 (REEL).

This sequence belongs to the protein disulfide isomerase family. Interacts with CALR (via P-domain).

It localises to the endoplasmic reticulum lumen. It carries out the reaction Catalyzes the rearrangement of -S-S- bonds in proteins.. This is Protein disulfide-isomerase A5 (Pdia5) from Mus musculus (Mouse).